The chain runs to 239 residues: Endonuclease V (239 aa).

Positions 50 and 118 each coordinate Mg(2+).

This sequence belongs to the endonuclease V family. It depends on Mg(2+) as a cofactor.

It is found in the cytoplasm. The catalysed reaction is Endonucleolytic cleavage at apurinic or apyrimidinic sites to products with a 5'-phosphate.. Its function is as follows. DNA repair enzyme involved in the repair of deaminated bases. Selectively cleaves double-stranded DNA at the second phosphodiester bond 3' to a deoxyinosine leaving behind the intact lesion on the nicked DNA. This is Endonuclease V from Xylella fastidiosa (strain 9a5c).